The following is a 174-amino-acid chain: Inner membrane protein p22 (174 aa).

Topologically, residues 1-7 (MLHIKMT) are intravirion. A helical membrane pass occupies residues 8–28 (ISTLLIALIVLLIIILVVFLY). The Virion surface segment spans residues 29-174 (HKKQQPPKKV…LYLPRNHKYA (146 aa)).

It belongs to the asfivirus inner membrane protein p22 family.

The protein resides in the virion membrane. The protein localises to the host cell membrane. This is Inner membrane protein p22 from African swine fever virus (isolate Pig/Kenya/KEN-50/1950) (ASFV).